The primary structure comprises 66 residues: Moricin-2 (66 aa).

The first 24 residues, 1 to 24 (MNILKLFFVFIVAMSLVSCSTAAP), serve as a signal peptide directing secretion.

In terms of tissue distribution, expressed in fat body and to a lesser extent in hemocyte and Malpighian tubules.

Its subcellular location is the secreted. Has antibacterial activity against Gram-positive and Gram-negative bacteria. Probably acts by disturbing membrane functions with its amphipathic structure. The polypeptide is Moricin-2 (MOR2) (Bombyx mori (Silk moth)).